Here is a 209-residue protein sequence, read N- to C-terminus: Large ribosomal subunit protein uL3 (209 aa).

Positions 128-154 (QQRGPMTHGSKFHRAPGSMGASSDPSR) are disordered.

This sequence belongs to the universal ribosomal protein uL3 family. In terms of assembly, part of the 50S ribosomal subunit. Forms a cluster with proteins L14 and L19.

In terms of biological role, one of the primary rRNA binding proteins, it binds directly near the 3'-end of the 23S rRNA, where it nucleates assembly of the 50S subunit. This chain is Large ribosomal subunit protein uL3, found in Clostridium beijerinckii (strain ATCC 51743 / NCIMB 8052) (Clostridium acetobutylicum).